The primary structure comprises 458 residues: DNA repair protein RadA (458 aa).

The C4-type zinc finger occupies 10–27 (CQSCGYESPKWMGKCPGC). 98–105 (GDPGIGKS) serves as a coordination point for ATP. The RadA KNRFG motif signature appears at 255–259 (KNRFG). Positions 354–458 (DAYLKVAGGV…AEALRTSLGG (105 aa)) are lon-protease-like.

Belongs to the RecA family. RadA subfamily. Interacts with DisA.

Its function is as follows. DNA-dependent ATPase involved in processing of recombination intermediates, plays a role in repairing DNA breaks. Stimulates the branch migration of RecA-mediated strand transfer reactions, allowing the 3' invading strand to extend heteroduplex DNA faster. Binds ssDNA in the presence of ADP but not other nucleotides, has ATPase activity that is stimulated by ssDNA and various branched DNA structures, but inhibited by SSB. Does not have RecA's homology-searching function. Plays a role in DNA repair. Might stabilize or process Holliday junction intermediates. May work with DisA following methyl methanesulfonate (MMS) but not H(2)O(2) damage; DisA is a DNA integrity scanning protein with c-di-AMP synthase activity. The chain is DNA repair protein RadA from Bacillus subtilis (strain 168).